The primary structure comprises 151 residues: 3-hydroxyacyl-[acyl-carrier-protein] dehydratase FabZ (151 aa).

His-54 is a catalytic residue.

Belongs to the thioester dehydratase family. FabZ subfamily.

It localises to the cytoplasm. It catalyses the reaction a (3R)-hydroxyacyl-[ACP] = a (2E)-enoyl-[ACP] + H2O. In terms of biological role, involved in unsaturated fatty acids biosynthesis. Catalyzes the dehydration of short chain beta-hydroxyacyl-ACPs and long chain saturated and unsaturated beta-hydroxyacyl-ACPs. In Cronobacter sakazakii (strain ATCC BAA-894) (Enterobacter sakazakii), this protein is 3-hydroxyacyl-[acyl-carrier-protein] dehydratase FabZ.